The sequence spans 469 residues: Zinc finger CCCH domain-containing protein 30 (469 aa).

A C3H1-type zinc finger spans residues 415 to 443 (VRPMKPCAYFNSPKGCRNGASCTFLHDAS). A disordered region spans residues 444–469 (APTRKDHQKQKGSKRIKLDNTMGGRN). Residues 449–458 (DHQKQKGSKR) show a composition bias toward basic residues.

This is Zinc finger CCCH domain-containing protein 30 from Oryza sativa subsp. japonica (Rice).